Consider the following 130-residue polypeptide: Keratin-associated protein 12-1 (130 aa).

14 tandem repeats follow at residues 10–14, 15–29, 34–38, 40–44, 45–49, 60–64, 85–89, 90–94, 95–99, 104–108, 109–113, 114–118, 119–123, and 124–128. A 14 X 5 AA approximate repeats region spans residues 10–128; that stretch reads CQPSCCVSSS…CKPVTCSNPS (119 aa).

It belongs to the KRTAP type 12 family. Interacts with hair keratins. As to expression, expressed only in the head and back skin of a 3 day old mouse. Not expressed in adult skin.

In the hair cortex, hair keratin intermediate filaments are embedded in an interfilamentous matrix, consisting of hair keratin-associated proteins (KRTAP), which are essential for the formation of a rigid and resistant hair shaft through their extensive disulfide bond cross-linking with abundant cysteine residues of hair keratins. The matrix proteins include the high-sulfur and high-glycine-tyrosine keratins. The chain is Keratin-associated protein 12-1 from Mus musculus (Mouse).